The chain runs to 84 residues: MARKPASSQDFETTLVQLENIVTHLENGDLPLEEALKEFEQGVQLAKLGQERLQQAEQRIQILLQKTEDAPLNDYKGNDYEGNA.

This sequence belongs to the XseB family. As to quaternary structure, heterooligomer composed of large and small subunits.

Its subcellular location is the cytoplasm. It catalyses the reaction Exonucleolytic cleavage in either 5'- to 3'- or 3'- to 5'-direction to yield nucleoside 5'-phosphates.. Bidirectionally degrades single-stranded DNA into large acid-insoluble oligonucleotides, which are then degraded further into small acid-soluble oligonucleotides. In Haemophilus influenzae (strain ATCC 51907 / DSM 11121 / KW20 / Rd), this protein is Exodeoxyribonuclease 7 small subunit.